The following is a 239-amino-acid chain: Prolyl hydroxylase EGLN3 (239 aa).

The interval 62–73 (AGPRAGVSKRHL) is beta(2)beta(3) 'finger-like' loop. The tract at residues 88-104 (CEAINFLLSLIDRLVLY) is required for interaction with ADRB2. A Fe2OG dioxygenase domain is found at 116–214 (ERSKAMVACY…RYAMTVWYFD (99 aa)). Positions 135, 137, and 196 each coordinate Fe cation. Arg-205 is a binding site for 2-oxoglutarate.

Interacts with ADRB2; the interaction hydroxylates ADRB2 facilitating its ubiquitination by the VHL-E3 ligase complex. Interacts with PAX2; the interaction targets PAX2 for destruction. Interacts with PKM; the interaction hydroxylates PKM in hypoxia. Interacts with WDR83; the interaction leads to almost complete elimination of HIF-mediated reporter activity. Interacts with BCL2 (via its BH4 domain); the interaction disrupts the BAX-BCL4 complex inhibiting the anti-apoptotic activity of BCL2. It depends on Fe(2+) as a cofactor. L-ascorbate serves as cofactor. Ubiquitinated by SIAH1 and/or SIAH2 in response to the unfolded protein response (UPR), leading to its degradation. As to expression, highly expressed in vascular smooth muscle. Moderately expressed in esophagus, stomach, small bowel and aorta. Low levels in tail and kidney. Expression also in pheochromocytoma cell line PC-12.

The protein resides in the nucleus. Its subcellular location is the cytoplasm. The catalysed reaction is L-prolyl-[protein] + 2-oxoglutarate + O2 = trans-4-hydroxy-L-prolyl-[protein] + succinate + CO2. The enzyme catalyses L-prolyl-[hypoxia-inducible factor alpha subunit] + 2-oxoglutarate + O2 = trans-4-hydroxy-L-prolyl-[hypoxia-inducible factor alpha subunit] + succinate + CO2. Prolyl hydroxylase that mediates hydroxylation of proline residues in target proteins, such as PKM, TELO2, ATF4 and HIF1A. Target proteins are preferentially recognized via a LXXLAP motif. Cellular oxygen sensor that catalyzes, under normoxic conditions, the post-translational formation of 4-hydroxyproline in hypoxia-inducible factor (HIF) alpha proteins. Hydroxylates a specific proline found in each of the oxygen-dependent degradation (ODD) domains (N-terminal, NODD, and C-terminal, CODD) of HIF1A. Also hydroxylates HIF2A. Has a preference for the CODD site for both HIF1A and HIF2A. Hydroxylation on the NODD site by EGLN3 appears to require prior hydroxylation on the CODD site. Hydroxylated HIFs are then targeted for proteasomal degradation via the von Hippel-Lindau ubiquitination complex. Under hypoxic conditions, the hydroxylation reaction is attenuated allowing HIFs to escape degradation resulting in their translocation to the nucleus, heterodimerization with HIF1B, and increased expression of hypoxy-inducible genes. ELGN3 is the most important isozyme in limiting physiological activation of HIFs (particularly HIF2A) in hypoxia. Also hydroxylates PKM in hypoxia, limiting glycolysis. Under normoxia, hydroxylates and regulates the stability of ADRB2. Regulator of cardiomyocyte and neuronal apoptosis. In cardiomyocytes, inhibits the anti-apoptotic effect of BCL2 by disrupting the BAX-BCL2 complex. In neurons, has a NGF-induced proapoptotic effect, probably through regulating CASP3 activity. Also essential for hypoxic regulation of neutrophilic inflammation. Plays a crucial role in DNA damage response (DDR) by hydroxylating TELO2, promoting its interaction with ATR which is required for activation of the ATR/CHK1/p53 pathway. Also mediates hydroxylation of ATF4, leading to decreased protein stability of ATF4. This is Prolyl hydroxylase EGLN3 (Egln3) from Rattus norvegicus (Rat).